The primary structure comprises 307 residues: Dioxygenase swnH1 (307 aa).

Residues His149, Asp151, and His227 each coordinate Fe cation.

It belongs to the PhyH family. As to quaternary structure, homodimer. The cofactor is Fe cation.

It participates in mycotoxin biosynthesis. Functionally, dioxygenase; part of the gene cluster that mediates the biosynthesis of swainsonine (SW), a cytotoxic fungal alkaloid and a potential cancer therapy drug. Swainsonine production occurs via a multibranched pathway and is dispensable for fungal colonization of plants and infection of insect hosts. The first step of swainsonine biosynthesis is the production of the precursor pipecolic acid (PA) via conversion of L-lysine (Lys) to 1-piperideine-6-carboxylate (P6C) by the aminotransferase swnA, the latter being further reduced to PA by the reductase swnR. PA can be converted from lysine by both the SW biosynthetic cluster and the unclustered genes such as lysine cyclodeaminase. The PKS-NRPS hybrid synthetase swnK uptakes and condensates PA and malonyl-CoA with and without skipping of the ketoreductase (KR) domain in order to produce 3 intermediates, 1-oxoindolizidine, (1S)-1-hydroxyindolizin, and (1R)-1-hydroxyindolizine; with the transisomer (1S)-1-hydroxyindolizin being predominant. The terminal thioester reductase (TE) domain of swnK is involved in reduction of the thioester bond to release the intermediate aldehydes. The oxidoreductase swnN could contribute to the reduction of 1-oxoindolizidine to (1S)-1-hydroxyindolizin and (1R)-1-hydroxyindolizine, contributing to the major route of SW production. The dioxygenase swnH2 would be responsible for the oxidization of (1R)-1-hydroxyindolizine into (1R,2S)-1,2-dihydroxyindolizine and of (1S)-1-hydroxyindolizin to yield both (1R,2S)-1,2-dihydroxyindolizine and (1S,2S)-1,2-dihydroxyindolizine. The dioxygenase swnH1 then performs the conversion of the 1,2-dihydroxyindolizine epimers to SW. This Metarhizium robertsii (strain ARSEF 23 / ATCC MYA-3075) (Metarhizium anisopliae (strain ARSEF 23)) protein is Dioxygenase swnH1.